Consider the following 219-residue polypeptide: Small ribosomal subunit protein uS3c (219 aa).

Residues 47–118 (IRNHVRNSSN…KLRMTLVEVL (72 aa)) form the KH type-2 domain.

The protein belongs to the universal ribosomal protein uS3 family. In terms of assembly, part of the 30S ribosomal subunit.

The protein resides in the plastid. Its subcellular location is the chloroplast. This chain is Small ribosomal subunit protein uS3c (rps3), found in Chara vulgaris (Common stonewort).